Consider the following 212-residue polypeptide: Ribosomal RNA small subunit methyltransferase G (212 aa).

Residues Gly80, Leu85, 131-132 (AE), and Arg146 contribute to the S-adenosyl-L-methionine site.

The protein belongs to the methyltransferase superfamily. RNA methyltransferase RsmG family.

It localises to the cytoplasm. It carries out the reaction guanosine(527) in 16S rRNA + S-adenosyl-L-methionine = N(7)-methylguanosine(527) in 16S rRNA + S-adenosyl-L-homocysteine. Its function is as follows. Specifically methylates the N7 position of guanine in position 527 of 16S rRNA. The chain is Ribosomal RNA small subunit methyltransferase G from Xanthomonas euvesicatoria pv. vesicatoria (strain 85-10) (Xanthomonas campestris pv. vesicatoria).